Consider the following 1129-residue polypeptide: CRISPR-associated endonuclease Cas12b (1129 aa).

The interval 1–14 (MAVKSIKVKLRLDD) is WED-I (OBD-I) domain. The segment at 4–9 (KSIKVK) is binds sgRNA. Residues 15 to 386 (MPEIRAGLWK…FATFTLPDAT (372 aa)) are REC1 (Helical-1)domain. 2 binds DNA protospacer adjacent motif (PAM) on target DNA regions span residues 118–122 (QQIAR) and 143–144 (GN). The tract at residues 387-518 (AHPIWTRFDK…QSQSEARGER (132 aa)) is WED-II (OBD-II) domain. Positions 442 to 446 (SMSEQ) are binds sgRNA. The segment at 519-628 (RPPYAAVFRL…LLKLPGETES (110 aa)) is ruvC-I domain. D570 serves as the catalytic For DNase activity of RuvC domain. The binds non-target ssDNA stretch occupies residues 573-574 (LR). The bridge helix domain stretch occupies residues 629-658 (KDLRAIREERQRTLRQLRTQLAYLRLLVRC). The tract at residues 659–784 (GSEDVGRRER…SFFGKVSGQV (126 aa)) is REC2 (Helical-II) domain. Binds sgRNA stretches follow at residues 742–746 (RPKIR), 753–754 (VG), 792–796 (RFAIT), 800–819 (HIDH…IIME), and 835–839 (WVAKY). The tract at residues 785–900 (IRAEKGSRFA…GTMYAAFSSR (116 aa)) is ruvC-II domain. The active-site For DNase activity of RuvC domain is the E848. The interval 897-900 (FSSR) is binds non-target ssDNA. The phosphate site is built by S899 and R911. The interval 901–974 (FDARTGAPGI…SAEEGDFHQI (74 aa)) is nuc-I domain. The binds sgRNA stretch occupies residues 973 to 978 (QIHADL). Residues 975-993 (HADLNAAQNLQQRLWSDFD) are ruvC-III domain. D977 serves as the catalytic For DNase activity of RuvC domain. Residues 994-1129 (ISQIRLRCDW…DSACENTGDI (136 aa)) form a nuc-II domain region.

Belongs to the CRISPR-associated endonuclease Cas12b family. Monomer. A divalent metal cation is required as a cofactor.

CRISPR (clustered regularly interspaced short palindromic repeat), is an adaptive immune system that provides protection against mobile genetic elements (viruses, transposable elements and conjugative plasmids). CRISPR clusters contain sequences complementary to antecedent mobile elements and target invading nucleic acids. CRISPR clusters are transcribed and processed into CRISPR RNA (crRNA). In type II CRISPR systems correct processing of pre-crRNA requires a trans-encoded small RNA (tracrRNA), endogenous ribonuclease 3 (rnc) and this protein. The tracrRNA serves as a guide for ribonuclease 3-aided processing of pre-crRNA. Protein-crRNA-tracrRNA endonucleolytically cleave dsDNA target complementary to the spacer; protein is inactive in the absence of crRNA homologous to the target and tracrRNA. Recognizes a short motif in the CRISPR repeat sequences (the 5' PAM or protospacer adjacent motif, TTN in this organism) to help distinguish self versus nonself, as targets within the bacterial CRISPR locus do not have PAMs. PAM recognition is also required for catalytic activity. Cleavage results in staggered 6-8 base 5'-overhangs 14-17 and 23-24 bases downstream of the PAM (protospacer adjacent motif) on the non-target and target strands respectively. Both target and non-target strand DNA are probably independently cleaved in the same active site. This Alicyclobacillus acidoterrestris (strain ATCC 49025 / DSM 3922 / CIP 106132 / NCIMB 13137 / GD3B) protein is CRISPR-associated endonuclease Cas12b.